The chain runs to 631 residues: Translation factor GUF1, mitochondrial (631 aa).

The transit peptide at 1-19 (MFNRRLLRHVRYAFQQVRS) directs the protein to the mitochondrion. Residues 33 to 214 (ERYRNFSIVA…AIVDRIPPPT (182 aa)) enclose the tr-type G domain. GTP-binding positions include 42 to 49 (AHVDHGKS), 107 to 111 (DTPGH), and 161 to 164 (NKID).

The protein belongs to the TRAFAC class translation factor GTPase superfamily. Classic translation factor GTPase family. LepA subfamily.

The protein resides in the mitochondrion inner membrane. The enzyme catalyses GTP + H2O = GDP + phosphate + H(+). Its function is as follows. Promotes mitochondrial protein synthesis. May act as a fidelity factor of the translation reaction, by catalyzing a one-codon backward translocation of tRNAs on improperly translocated ribosomes. Binds to mitochondrial ribosomes in a GTP-dependent manner. This is Translation factor GUF1, mitochondrial from Kluyveromyces lactis (strain ATCC 8585 / CBS 2359 / DSM 70799 / NBRC 1267 / NRRL Y-1140 / WM37) (Yeast).